A 332-amino-acid chain; its full sequence is RNA polymerase II holoenzyme cyclin-like subunit (332 aa).

Positions 74 to 175 (RIYCYFLIMK…LIEELQSYMI (102 aa)) constitute a Cyclin N-terminal domain.

Belongs to the cyclin family. Cyclin C subfamily. Component of the SRB8-11 complex, a regulatory module of the Mediator complex.

Its subcellular location is the nucleus. Component of the SRB8-11 complex. The SRB8-11 complex is a regulatory module of the Mediator complex which is itself involved in regulation of basal and activated RNA polymerase II-dependent transcription. The SRB8-11 complex may be involved in the transcriptional repression of a subset of genes regulated by Mediator. It may inhibit the association of the Mediator complex with RNA polymerase II to form the holoenzyme complex. The SRB8-11 complex phosphorylates the C-terminal domain (CTD) of the largest subunit of RNA polymerase II. The polypeptide is RNA polymerase II holoenzyme cyclin-like subunit (SSN8) (Eremothecium gossypii (strain ATCC 10895 / CBS 109.51 / FGSC 9923 / NRRL Y-1056) (Yeast)).